The sequence spans 266 residues: Small ribosomal subunit protein uS2 (266 aa).

Belongs to the universal ribosomal protein uS2 family.

The sequence is that of Small ribosomal subunit protein uS2 from Paramagnetospirillum magneticum (strain ATCC 700264 / AMB-1) (Magnetospirillum magneticum).